The following is a 405-amino-acid chain: Tryptophan synthase beta chain (405 aa).

The residue at position 95 (K95) is an N6-(pyridoxal phosphate)lysine.

The protein belongs to the TrpB family. As to quaternary structure, tetramer of two alpha and two beta chains. The cofactor is pyridoxal 5'-phosphate.

It carries out the reaction (1S,2R)-1-C-(indol-3-yl)glycerol 3-phosphate + L-serine = D-glyceraldehyde 3-phosphate + L-tryptophan + H2O. It participates in amino-acid biosynthesis; L-tryptophan biosynthesis; L-tryptophan from chorismate: step 5/5. Functionally, the beta subunit is responsible for the synthesis of L-tryptophan from indole and L-serine. This Pseudomonas putida (strain ATCC 700007 / DSM 6899 / JCM 31910 / BCRC 17059 / LMG 24140 / F1) protein is Tryptophan synthase beta chain.